The sequence spans 109 residues: Iron-sulfur cluster assembly protein CyaY (109 aa).

This sequence belongs to the frataxin family.

Functionally, involved in iron-sulfur (Fe-S) cluster assembly. May act as a regulator of Fe-S biogenesis. This chain is Iron-sulfur cluster assembly protein CyaY, found in Burkholderia lata (strain ATCC 17760 / DSM 23089 / LMG 22485 / NCIMB 9086 / R18194 / 383).